A 351-amino-acid chain; its full sequence is Methylthioribose-1-phosphate isomerase (351 aa).

Residues 51–53 (RGA), Arg94, and Gln199 contribute to the substrate site. Residue Asp240 is the Proton donor of the active site. 250–251 (NK) serves as a coordination point for substrate.

It belongs to the EIF-2B alpha/beta/delta subunits family. MtnA subfamily. Homodimer.

The enzyme catalyses 5-(methylsulfanyl)-alpha-D-ribose 1-phosphate = 5-(methylsulfanyl)-D-ribulose 1-phosphate. It functions in the pathway amino-acid biosynthesis; L-methionine biosynthesis via salvage pathway; L-methionine from S-methyl-5-thio-alpha-D-ribose 1-phosphate: step 1/6. In terms of biological role, catalyzes the interconversion of methylthioribose-1-phosphate (MTR-1-P) into methylthioribulose-1-phosphate (MTRu-1-P). The chain is Methylthioribose-1-phosphate isomerase from Bacillus thuringiensis (strain Al Hakam).